The chain runs to 33 residues: Rugosin-A (33 aa).

Cysteines 27 and 33 form a disulfide.

The protein belongs to the frog skin active peptide (FSAP) family. Brevinin subfamily. Expressed by the skin glands.

It localises to the secreted. Has antibacterial activity against Gram-positive bacteria. The protein is Rugosin-A of Glandirana rugosa (Japanese wrinkled frog).